Here is a 693-residue protein sequence, read N- to C-terminus: Elongation factor G (693 aa).

A tr-type G domain is found at 8-282; the sequence is EKTRNIGIMA…AVIDYLPSPL (275 aa). Residues 17–24, 81–85, and 135–138 contribute to the GTP site; these read AHVDAGKT, DTPGH, and NKMD.

This sequence belongs to the TRAFAC class translation factor GTPase superfamily. Classic translation factor GTPase family. EF-G/EF-2 subfamily.

The protein resides in the cytoplasm. Functionally, catalyzes the GTP-dependent ribosomal translocation step during translation elongation. During this step, the ribosome changes from the pre-translocational (PRE) to the post-translocational (POST) state as the newly formed A-site-bound peptidyl-tRNA and P-site-bound deacylated tRNA move to the P and E sites, respectively. Catalyzes the coordinated movement of the two tRNA molecules, the mRNA and conformational changes in the ribosome. The sequence is that of Elongation factor G from Streptococcus pneumoniae (strain CGSP14).